A 311-amino-acid polypeptide reads, in one-letter code: MSNSIVIQTNSTVIEDMKQQYKHSLSPKTPQGGIFMAKVPSCTITAYKSGKVMFQGGRAEAEAARWQTGSQTPKTAVKKAVDSHRYTPPASIGTMSIVGSDEVGTGDFFGPMTVVAVYVDAKQIPLLKELGVKDSKNLNDEQITAIAKQLLHVVPYSSLVLHNEKYNELFDKGNNQGKLKALLHNKAITNLLAKLAPTKPEGVLIDQFTQPDTYYKYLAKQKQVQRENVYFATKGESVHLAVAAASILARYSFVKQFNELSKKAGMPLPKGAGKQVDIAAAKLIQKLGKERLPEFVKLHFANTEKAFRLLK.

An RNase H type-2 domain is found at 95 to 311 (MSIVGSDEVG…NTEKAFRLLK (217 aa)). Residues D101, E102, and D206 each coordinate a divalent metal cation.

It belongs to the RNase HII family. RnhC subfamily. The cofactor is Mn(2+). Requires Mg(2+) as cofactor.

It is found in the cytoplasm. It carries out the reaction Endonucleolytic cleavage to 5'-phosphomonoester.. Endonuclease that specifically degrades the RNA of RNA-DNA hybrids. The polypeptide is Ribonuclease HIII (Bacillus cereus (strain ZK / E33L)).